A 520-amino-acid polypeptide reads, in one-letter code: MPGSLPLNAEACWPKDVGIVALEIYFPSQYVDQAELEKYDGVDAGKYTIGLGQAKMGFCTDREDINSLCMTVVQNLMERNNLSYDCIGRLEVGTETIIDKSKSVKTNLMQLFEESGNTDIEGIDTTNACYGGTAAVFNAVNWIESSSWDGRYALVVAGDIAVYATGNARPTGGVGAVALLIGPNAPLIFERGLRGTHMQHAYDFYKPDMLSEYPIVDGKLSIQCYLSALDRCYSVYCKKIHAQWQKEGNDKDFTLNDFGFMIFHSPYCKLVQKSLARMLLNDFLNDQNRDKNSIYSGLEAFGDVKLEDTYFDRDVEKAFMKASSELFSQKTKASLLVSNQNGNMYTSSVYGSLASVLAQYSPQQLAGKRIGVFSYGSGLAATLYSLKVTQDATPGSALDKITASLCDLKSRLDSRTGVAPDVFAENMKLREDTHHLVNYIPQGSIDSLFEGTWYLVRVDEKHRRTYARRPTPNDDTLDEGVGLVHSNIATEHIPSPAKKVPRLPATAAEPEAAVISNGEH.

S4 bears the Phosphoserine mark. (3S)-3-hydroxy-3-methylglutaryl-CoA is bound by residues D43 and A44. 44 to 46 (AGK) lines the CoA pocket. Position 46 is an N6-acetyllysine (K46). E95 (proton donor/acceptor) is an active-site residue. Residues C129, N167, T171, S221, and H264 each coordinate (3S)-3-hydroxy-3-methylglutaryl-CoA. Catalysis depends on C129, which acts as the Acyl-thioester intermediate. Residue N167 participates in CoA binding. S221 is a CoA binding site. H264 serves as the catalytic Proton donor/acceptor. The CoA site is built by K269 and K273. The (3S)-3-hydroxy-3-methylglutaryl-CoA site is built by K273, N343, and S377. K273 bears the N6-acetyllysine mark. T476 carries the phosphothreonine modification. Residues 492–520 (HIPSPAKKVPRLPATAAEPEAAVISNGEH) form a disordered region. Phosphoserine occurs at positions 495 and 516.

This sequence belongs to the thiolase-like superfamily. HMG-CoA synthase family. As to quaternary structure, homodimer.

Its subcellular location is the cytoplasm. The enzyme catalyses acetoacetyl-CoA + acetyl-CoA + H2O = (3S)-3-hydroxy-3-methylglutaryl-CoA + CoA + H(+). Its pathway is metabolic intermediate biosynthesis; (R)-mevalonate biosynthesis; (R)-mevalonate from acetyl-CoA: step 2/3. Its function is as follows. Catalyzes the condensation of acetyl-CoA with acetoacetyl-CoA to form HMG-CoA, which is converted by HMG-CoA reductase (HMGCR) into mevalonate, a precursor for cholesterol synthesis. The sequence is that of Hydroxymethylglutaryl-CoA synthase, cytoplasmic from Homo sapiens (Human).